We begin with the raw amino-acid sequence, 1653 residues long: Ciliary rootlet coiled-coil protein 2 (1653 aa).

The span at 1–17 shows a compositional bias: polar residues; the sequence is MSSASSEPGNGDASQQP. A disordered region spans residues 1–57; the sequence is MSSASSEPGNGDASQQPLLGLDTVIQRLEDTILSPTASREDRALTVRGEGRQASPTP. The segment covering 38-50 has biased composition (basic and acidic residues); it reads SREDRALTVRGEG. Coiled coils occupy residues 86–145 and 310–351; these read VARV…SELE and KVAL…LVAQ. The disordered stretch occupies residues 367 to 396; it reads LGEPRRPLRSPQRATSPHQGASPPHICSPA. Positions 423 to 1215 form a coiled coil; that stretch reads LKSSQALVAS…QRKLAEVEAA (793 aa). The segment at 1302 to 1356 is disordered; sequence GLQRQSPWASPEQPGSPTKGSDSSQALPGQQGTSPPARPHSPLRWPSPTPGGRSS. A compositionally biased stretch (polar residues) spans 1304–1335; that stretch reads QRQSPWASPEQPGSPTKGSDSSQALPGQQGTS. Residues 1361 to 1570 are a coiled coil; the sequence is VATVQDILRD…QAQMTEMEQA (210 aa).

It belongs to the rootletin family.

The sequence is that of Ciliary rootlet coiled-coil protein 2 from Homo sapiens (Human).